A 108-amino-acid chain; its full sequence is uncharacterized protein (108 aa).

Thr-56 is subject to Phosphothreonine. Residues 89–108 (AQAKGTEQAEALKKGTSKWF) are disordered.

It is found in the cytoplasm. This is an uncharacterized protein from Schizosaccharomyces pombe (strain 972 / ATCC 24843) (Fission yeast).